Here is a 175-residue protein sequence, read N- to C-terminus: Acetyl-CoA decarbonylase/synthase complex subunit epsilon 2 (175 aa).

The protein belongs to the CdhB family. In terms of assembly, heterotetramer of two alpha and two epsilon subunits. The ACDS complex is made up of alpha, epsilon, beta, gamma and delta subunits with a probable stoichiometry of (alpha(2)epsilon(2))(4)-beta(8)-(gamma(1)delta(1))(8).

Functionally, part of a complex that catalyzes the reversible cleavage of acetyl-CoA, allowing autotrophic growth from CO(2). The alpha-epsilon subcomponent functions as a carbon monoxide dehydrogenase. The precise role of the epsilon subunit is unclear; it may have a stabilizing role within the alpha(2)epsilon(2) component and/or be involved in electron transfer to FAD during a potential FAD-mediated CO oxidation. The polypeptide is Acetyl-CoA decarbonylase/synthase complex subunit epsilon 2 (cdhB2) (Archaeoglobus fulgidus (strain ATCC 49558 / DSM 4304 / JCM 9628 / NBRC 100126 / VC-16)).